A 159-amino-acid chain; its full sequence is Endoribonuclease YbeY (159 aa).

Zn(2+) is bound by residues histidine 125, histidine 129, and histidine 135.

This sequence belongs to the endoribonuclease YbeY family. Requires Zn(2+) as cofactor.

The protein localises to the cytoplasm. Its function is as follows. Single strand-specific metallo-endoribonuclease involved in late-stage 70S ribosome quality control and in maturation of the 3' terminus of the 16S rRNA. The polypeptide is Endoribonuclease YbeY (Thermoanaerobacter pseudethanolicus (strain ATCC 33223 / 39E) (Clostridium thermohydrosulfuricum)).